Here is a 567-residue protein sequence, read N- to C-terminus: Platelet glycoprotein V (567 aa).

Positions 1–16 are cleaved as a signal peptide; that stretch reads MLRSALLSAVLPLLRA. The LRRNT domain occupies 17–50; the sequence is QPFPCPKTCKCVVRDAAQCSGGSVAHIAELGLPT. The Extracellular segment spans residues 17–522; it reads QPFPCPKTCK…ESPNNRLYWG (506 aa). Asparagine 51 and asparagine 67 each carry an N-linked (GlcNAc...) asparagine glycan. LRR repeat units follow at residues 75-96, 99-120, 123-144, 147-168, 171-193, 195-216, 219-240, 243-264, 267-288, 291-312, 315-337, 340-361, 364-385, and 388-409; these read VLQR…TFND, KLKT…ILDK, LLEQ…LFQQ, NLQE…LFSS, ELKL…LGAQ, KLEK…LLSN, ALTE…AFDR, NLSS…LFLH, SVSR…LFGE, GLRE…AFRN, GLQT…VFQG, ELRV…ALRG, HLRQ…LFRN, and SLES…VFAA. Residue asparagine 181 is glycosylated (N-linked (GlcNAc...) asparagine). Asparagine 243 carries N-linked (GlcNAc...) asparagine glycosylation. N-linked (GlcNAc...) asparagine glycosylation is found at asparagine 298 and asparagine 312. The N-linked (GlcNAc...) asparagine glycan is linked to asparagine 385. The LRRCT domain occupies 421–474; the sequence is NPWLCDCGLWRFLQWLRHHPDILGRDEPPQCRGPEPRASLSFWELLQGDPWCPD. The helical transmembrane segment at 523 to 543 threads the bilayer; the sequence is LYILLLVAQAIIAAFIVFAMI. Residues 544–567 lie on the Cytoplasmic side of the membrane; that stretch reads KIGQLFRTLIREKLLLEAMGKSCN.

It is found in the membrane. In terms of biological role, the GPIb-V-IX complex functions as the vWF receptor and mediates vWF-dependent platelet adhesion to blood vessels. The adhesion of platelets to injured vascular surfaces in the arterial circulation is a critical initiating event in hemostasis. In Mus musculus (Mouse), this protein is Platelet glycoprotein V (Gp5).